Reading from the N-terminus, the 483-residue chain is Cytochrome P450 71A23 (483 aa).

The helical transmembrane segment at 1-21 (MILFLCLIILFIITILFFKKH) threads the bilayer. Heme is bound at residue C429.

Belongs to the cytochrome P450 family. Heme serves as cofactor.

It is found in the membrane. The polypeptide is Cytochrome P450 71A23 (CYP71A23) (Arabidopsis thaliana (Mouse-ear cress)).